Here is a 412-residue protein sequence, read N- to C-terminus: Serine hydroxymethyltransferase (412 aa).

(6S)-5,6,7,8-tetrahydrofolate-binding positions include Leu117 and 121–123 (GHL). N6-(pyridoxal phosphate)lysine is present on Lys226. Residue 349–351 (SPF) coordinates (6S)-5,6,7,8-tetrahydrofolate.

It belongs to the SHMT family. As to quaternary structure, homodimer. The cofactor is pyridoxal 5'-phosphate.

The protein resides in the cytoplasm. It carries out the reaction (6R)-5,10-methylene-5,6,7,8-tetrahydrofolate + glycine + H2O = (6S)-5,6,7,8-tetrahydrofolate + L-serine. The protein operates within one-carbon metabolism; tetrahydrofolate interconversion. Its pathway is amino-acid biosynthesis; glycine biosynthesis; glycine from L-serine: step 1/1. In terms of biological role, catalyzes the reversible interconversion of serine and glycine with tetrahydrofolate (THF) serving as the one-carbon carrier. This reaction serves as the major source of one-carbon groups required for the biosynthesis of purines, thymidylate, methionine, and other important biomolecules. Also exhibits THF-independent aldolase activity toward beta-hydroxyamino acids, producing glycine and aldehydes, via a retro-aldol mechanism. The sequence is that of Serine hydroxymethyltransferase from Oleidesulfovibrio alaskensis (strain ATCC BAA-1058 / DSM 17464 / G20) (Desulfovibrio alaskensis).